A 137-amino-acid chain; its full sequence is Putative pre-16S rRNA nuclease (137 aa).

This sequence belongs to the YqgF nuclease family.

It localises to the cytoplasm. Functionally, could be a nuclease involved in processing of the 5'-end of pre-16S rRNA. The chain is Putative pre-16S rRNA nuclease from Clostridium botulinum (strain Alaska E43 / Type E3).